Consider the following 273-residue polypeptide: MHDAQIRVAIAGAGGRMGRQLIQAALQMEGVALGAALEREGSSLVGSDAGELAGAGKAGVAVQSSLAAVKDDFDVLIDFTRPEGTLNHLAFCREHGKGMVIGTTGFDDAGKQAIRDAAQDIAIVFAANFSVGVNVLLKLLEKAAKVMGDYTDIEIIEAHHRHKVDAPSGTALAMGEAIAGALNKDLKDCAVYSREGYTGERVPGTIGFATVRAGDIVGEHTAMFADIGERIEITHKASSRMTFANGAVRSALWLKGKKNGLFDMRDVLDLNSL.

Residues 12 to 17 and Glu38 each bind NAD(+); that span reads GAGGRM. Arg39 contacts NADP(+). Residues 102 to 104 and 126 to 129 contribute to the NAD(+) site; these read GTT and AANF. His159 acts as the Proton donor/acceptor in catalysis. Position 160 (His160) interacts with (S)-2,3,4,5-tetrahydrodipicolinate. Lys163 (proton donor) is an active-site residue. 169–170 provides a ligand contact to (S)-2,3,4,5-tetrahydrodipicolinate; the sequence is GT.

Belongs to the DapB family. As to quaternary structure, homotetramer.

The protein resides in the cytoplasm. The enzyme catalyses (S)-2,3,4,5-tetrahydrodipicolinate + NAD(+) + H2O = (2S,4S)-4-hydroxy-2,3,4,5-tetrahydrodipicolinate + NADH + H(+). The catalysed reaction is (S)-2,3,4,5-tetrahydrodipicolinate + NADP(+) + H2O = (2S,4S)-4-hydroxy-2,3,4,5-tetrahydrodipicolinate + NADPH + H(+). The protein operates within amino-acid biosynthesis; L-lysine biosynthesis via DAP pathway; (S)-tetrahydrodipicolinate from L-aspartate: step 4/4. Functionally, catalyzes the conversion of 4-hydroxy-tetrahydrodipicolinate (HTPA) to tetrahydrodipicolinate. This Klebsiella pneumoniae subsp. pneumoniae (strain ATCC 700721 / MGH 78578) protein is 4-hydroxy-tetrahydrodipicolinate reductase.